A 508-amino-acid chain; its full sequence is UDP-N-acetylmuramoyl-L-alanyl-D-glutamate--2,6-diaminopimelate ligase (508 aa).

S33 is a UDP-N-acetyl-alpha-D-muramoyl-L-alanyl-D-glutamate binding site. 121-127 (GTNGKST) is an ATP binding site. UDP-N-acetyl-alpha-D-muramoyl-L-alanyl-D-glutamate-binding positions include N162, 163–164 (TT), S190, Q196, and R198. The residue at position 230 (K230) is an N6-carboxylysine. Meso-2,6-diaminopimelate is bound by residues R399, 423-426 (DNPR), G474, and E478. Positions 423–426 (DNPR) match the Meso-diaminopimelate recognition motif motif.

Belongs to the MurCDEF family. MurE subfamily. Requires Mg(2+) as cofactor. Carboxylation is probably crucial for Mg(2+) binding and, consequently, for the gamma-phosphate positioning of ATP.

It is found in the cytoplasm. It catalyses the reaction UDP-N-acetyl-alpha-D-muramoyl-L-alanyl-D-glutamate + meso-2,6-diaminopimelate + ATP = UDP-N-acetyl-alpha-D-muramoyl-L-alanyl-gamma-D-glutamyl-meso-2,6-diaminopimelate + ADP + phosphate + H(+). Its pathway is cell wall biogenesis; peptidoglycan biosynthesis. Functionally, catalyzes the addition of meso-diaminopimelic acid to the nucleotide precursor UDP-N-acetylmuramoyl-L-alanyl-D-glutamate (UMAG) in the biosynthesis of bacterial cell-wall peptidoglycan. The sequence is that of UDP-N-acetylmuramoyl-L-alanyl-D-glutamate--2,6-diaminopimelate ligase from Buchnera aphidicola subsp. Baizongia pistaciae (strain Bp).